A 311-amino-acid chain; its full sequence is MEEIRVSPDYNWFRSTVPLKRIIVDDDDSKVWSLYDAGPKSIRCPIIFLPPVSGTAEVFFQQVLALSGWGYRVISLQYPVYWDLLEFCDGFRKLLDHLQLDKVHLFGASLGGFLAQKFAEVTYKSPRVHSLVLCNSFSDTSIFNQTWTANSFWLMPSFMLKKIVLGNFAKGPVDPKMADAIDFMVDRLESLNQSELASRLTLNCQNSYVEPHKIKDIAVTIMDVFDQSALSQEAKEEMYKLYPNARRAHLKTGGNFPYLCRSAEVNLYIQIHLRQFHGTRYAAISPEMVSAEELEVQRTHLSNNSESEDES.

Positions 86 to 159 (EFCDGFRKLL…NSFWLMPSFM (74 aa)) constitute an AB hydrolase-1 domain.

Belongs to the AB hydrolase superfamily.

Its subcellular location is the cytoplasm. This chain is Maspardin (spg21), found in Danio rerio (Zebrafish).